Reading from the N-terminus, the 87-residue chain is NADH dehydrogenase [ubiquinone] 1 alpha subcomplex subunit 4-like 2 (87 aa).

The protein belongs to the complex I NDUFA4 subunit family.

This chain is NADH dehydrogenase [ubiquinone] 1 alpha subcomplex subunit 4-like 2 (NDUFA4L2), found in Homo sapiens (Human).